Reading from the N-terminus, the 236-residue chain is Ubiquinone biosynthesis O-methyltransferase (236 aa).

S-adenosyl-L-methionine contacts are provided by Arg-39, Gly-59, Asp-80, and Met-124.

Belongs to the methyltransferase superfamily. UbiG/COQ3 family.

It catalyses the reaction a 3-demethylubiquinol + S-adenosyl-L-methionine = a ubiquinol + S-adenosyl-L-homocysteine + H(+). The catalysed reaction is a 3-(all-trans-polyprenyl)benzene-1,2-diol + S-adenosyl-L-methionine = a 2-methoxy-6-(all-trans-polyprenyl)phenol + S-adenosyl-L-homocysteine + H(+). The protein operates within cofactor biosynthesis; ubiquinone biosynthesis. O-methyltransferase that catalyzes the 2 O-methylation steps in the ubiquinone biosynthetic pathway. The chain is Ubiquinone biosynthesis O-methyltransferase from Shewanella pealeana (strain ATCC 700345 / ANG-SQ1).